The sequence spans 185 residues: MKIINPILPIIENILGNLTALQAEGKITTQPIERVALQWYESERNILRKTTNTGREVAFRLLKEGQRLKHDDVVFISDELVIAIEILPSDVIVLSPKTLPEMARACYEIGNKHSPLFLDGDEVTLPYDKPMFEWLQAAGFHPQKAERRLSQALRANSAQGHGHSHSHSHDHHGYHHHGDGHWHKH.

Positions 153 to 185 (LRANSAQGHGHSHSHSHDHHGYHHHGDGHWHKH) are disordered. Residues 162–175 (GHSHSHSHDHHGYH) are compositionally biased toward basic residues. The span at 176–185 (HHGDGHWHKH) shows a compositional bias: basic and acidic residues.

Belongs to the UreE family.

It localises to the cytoplasm. Functionally, involved in urease metallocenter assembly. Binds nickel. Probably functions as a nickel donor during metallocenter assembly. The chain is Urease accessory protein UreE from Haemophilus influenzae (strain 86-028NP).